The sequence spans 567 residues: Proton-coupled zinc antiporter SLC30A9, mitochondrial (567 aa).

Helical transmembrane passes span 238-258 (VVMV…LAWI), 313-333 (GVGI…MGLL), 341-361 (LLWA…TLLV), 391-411 (VILL…TCMG), and 423-443 (SLGS…LIYT). The LXXLL motif signature appears at 461 to 465 (LTELL).

This sequence belongs to the cation diffusion facilitator (CDF) transporter (TC 2.A.4) family. SLC30A subfamily. As to quaternary structure, interacts with GRIP1, ESR1, AR and CTNNB1.

It is found in the mitochondrion membrane. The protein localises to the nucleus. Its subcellular location is the endoplasmic reticulum. It catalyses the reaction Zn(2+)(in) + 2 H(+)(out) = Zn(2+)(out) + 2 H(+)(in). Its function is as follows. Acts as a zinc transporter involved in intracellular zinc homeostasis. Functions as a secondary coactivator for nuclear receptors by cooperating with p160 coactivators subtypes. Plays a role in transcriptional activation of Wnt-responsive genes. Mitochondrial proton-coupled zinc ion antiporter mediating the export of zinc from the mitochondria and involved in zinc homeostasis, zinc mobilization as well as mitochondrial morphology and health. In nucleus, functions as a secondary coactivator for nuclear receptors by cooperating with p160 coactivators subtypes. Plays a role in transcriptional activation of Wnt-responsive genes. The polypeptide is Proton-coupled zinc antiporter SLC30A9, mitochondrial (Slc30a9) (Mus musculus (Mouse)).